The primary structure comprises 1431 residues: Probable ATP-dependent RNA helicase spindle-E (1431 aa).

In terms of domain architecture, Helicase ATP-binding spans 127–294 (LAAIRENPVV…FAMSSSLPPV (168 aa)). Residue 140-147 (GETGCGKT) coordinates ATP. The short motif at 240–243 (DEVH) is the DEAH box element. Residues 354–526 (QSQQSYEEAK…NSVLKAKELE (173 aa)) enclose the Helicase C-terminal domain. The Tudor domain maps to 937–1000 (AKAVTKGLQL…RLMSPQLKRD (64 aa)).

It belongs to the DEAD box helicase family. DEAH subfamily.

The protein resides in the cytoplasm. The enzyme catalyses ATP + H2O = ADP + phosphate + H(+). Probable ATP-binding RNA helicase which plays a central role during spermatogenesis and oogenesis by repressing transposable elements and preventing their mobilization, which is essential for the germline integrity. Acts via the piRNA metabolic process, which mediates the repression of transposable elements during meiosis by forming complexes composed of piRNAs and Piwi and govern the methylation and subsequent repression of transposons. Involved in the repression of LTR retrotransposon copia. Also involved in telomere regulation by repressing specialized telomeric retroelements HeT-A, TAHRE, and TART; Drosophila telomeres being maintained by transposition of specialized telomeric retroelements. Involved in telomeric trans-silencing, a repression mechanism by which a transposon or a transgene inserted in subtelomeric heterochromatin has the capacity to repress in trans in the female germline, a homologous transposon, or transgene located in euchromatin. Involved in the repression of testis-expressed Stellate genes by the homologous Su(Ste) repeats. Required for anteroposterior and dorsoventral axis formation during oogenesis. This Drosophila mojavensis (Fruit fly) protein is Probable ATP-dependent RNA helicase spindle-E (spn-E).